The sequence spans 220 residues: Large ribosomal subunit protein uL3 (220 aa).

The segment at 130–156 (AIKRHGQSRGPMSHGSHFHRAPGSVGM) is disordered.

It belongs to the universal ribosomal protein uL3 family. As to quaternary structure, part of the 50S ribosomal subunit. Forms a cluster with proteins L14 and L19.

Its function is as follows. One of the primary rRNA binding proteins, it binds directly near the 3'-end of the 23S rRNA, where it nucleates assembly of the 50S subunit. In Staphylococcus aureus (strain Mu3 / ATCC 700698), this protein is Large ribosomal subunit protein uL3.